Here is a 1460-residue protein sequence, read N- to C-terminus: Collagen alpha-1(I) chain (1460 aa).

The signal sequence occupies residues 1–22 (MFSFVDLRLLLLLAATALLTHG). Positions 23–157 (QEEGQEEDIP…PPGLGGNFAP (135 aa)) are cleaved as a propeptide — N-terminal propeptide. Residues 34 to 92 (VTCVQNGLRYYDRDVWKPEACRICVCDNGNVLCDDVICDETKNCPGAQVPPGECCPVCP) form the VWFC domain. Residues 96–1213 (ASPTDQETTG…KAHDGGRYYR (1118 aa)) are disordered. Residues 134–149 (PGLPGPPGPPGPPGPP) are compositionally biased toward pro residues. The interval 158-174 (QMSYGYDEKSTGGISVP) is nonhelical region (N-terminal). The residue at position 166 (lysine 166) is an Allysine. Serine 167 bears the Phosphoserine mark. The triple-helical region stretch occupies residues 175 to 1188 (GPMGPSGPRG…PGPPGPPGPP (1014 aa)). Proline 186, proline 189, proline 192, proline 201, proline 204, proline 207, proline 222, proline 237, proline 243, proline 252, and proline 258 each carry 4-hydroxyproline. Residues 194–213 (PQGFQGPPGEPGEPGASGPM) show a composition bias toward low complexity. A compositionally biased stretch (basic and acidic residues) spans 225–239 (NGDDGEAGKPGRPGE). At lysine 261 the chain carries 5-hydroxylysine; alternate. O-linked (Gal...) hydroxylysine; alternate glycosylation occurs at lysine 261. Serine 267 carries the post-translational modification Phosphoserine. Residues 275–291 (DAGPAGPKGEPGSPGEN) show a composition bias toward low complexity. 5 positions are modified to 4-hydroxyproline: proline 285, proline 288, proline 294, proline 303, and proline 309. Low complexity predominate over residues 314 to 327 (PAGARGNDGATGAA). Positions 329 to 341 (PPGPTGPAGPPGF) are enriched in pro residues. Residues proline 330, proline 339, proline 342, proline 369, proline 372, proline 384, proline 390, proline 399, proline 405, proline 408, and proline 423 each carry the 4-hydroxyproline modification. Over residues 375 to 414 (AGAAGPAGNPGADGQPGAKGANGAPGIAGAPGFPGARGPS) the composition is skewed to low complexity. Residue lysine 426 is modified to 5-hydroxylysine. 8 positions are modified to 4-hydroxyproline: proline 432, proline 435, proline 447, proline 456, proline 471, proline 477, proline 486, and proline 492. Positions 481 to 490 (GERGGPGSRG) are enriched in gly residues. Lysine 501 is modified (5-hydroxylysine). 28 positions are modified to 4-hydroxyproline: proline 510, proline 519, proline 525, proline 531, proline 540, proline 543, proline 552, proline 561, proline 567, proline 579, proline 588, proline 597, proline 600, proline 618, proline 636, proline 642, proline 648, proline 654, proline 660, proline 666, proline 678, proline 687, proline 699, proline 711, proline 714, proline 720, proline 726, and proline 735. Residues 534–560 (KGLTGSPGSPGPDGKTGPPGPAGQDGR) show a composition bias toward low complexity. Residues 569 to 588 (ARGQAGVMGFPGPKGAAGEP) show a composition bias toward low complexity. Positions 630-657 (QGPAGSPGFQGLPGPAGPPGEAGKPGEQ) are enriched in low complexity. Residues 692–720 (PRGANGAPGNDGAKGDAGAPGAPGSQGAP) show a composition bias toward low complexity. A Cell attachment site motif is present at residues 741-743 (RGD). Lysine 747 carries the post-translational modification 5-hydroxylysine. 3 positions are modified to 4-hydroxyproline: proline 753, proline 768, and proline 774. Positions 780–794 (AGPSGPAGPTGARGA) are enriched in low complexity. Phosphoserine is present on serine 783. Proline 795, proline 801, proline 804, proline 813, proline 819, proline 837, proline 846, and proline 855 each carry 4-hydroxyproline. Over residues 807–834 (AGFAGPPGADGQPGAKGEPGDAGAKGDA) the composition is skewed to low complexity. Residues 836–848 (PPGPAGPTGPPGP) show a composition bias toward pro residues. Lysine 858 is subject to 5-hydroxylysine. Positions 863-879 (SAGPPGATGFPGAAGRV) are enriched in low complexity. A 4-hydroxyproline mark is found at proline 867 and proline 873. Position 881 is a 3-hydroxyproline (proline 881). 4-hydroxyproline occurs at positions 882, 891, 894, 915, 924, 933, 942, 960, 969, 972, 978, 993, 999, 1005, 1014, and 1020. Residues 908-917 (ETGPAGRPGE) are compositionally biased toward low complexity. The segment covering 927-951 (AGEKGSPGADGPAGAPGTPGPQGIA) has biased composition (low complexity). Over residues 992-1002 (PPGPMGPPGLA) the composition is skewed to pro residues. Over residues 1004 to 1019 (PPGESGREGSPGAEGS) the composition is skewed to low complexity. Lysine 1029 carries the post-translational modification 5-hydroxylysine. The segment covering 1038-1053 (AGPPGAPGAPGAPGPV) has biased composition (pro residues). A 4-hydroxyproline mark is found at proline 1041, proline 1044, and proline 1047. Residues 1074–1088 (IGPVGARGPAGPQGP) show a composition bias toward low complexity. The Cell attachment site signature appears at 1089–1091 (RGD). Over residues 1089-1103 (RGDKGETGEQGDRGI) the composition is skewed to basic and acidic residues. Lysine 1092 is subject to 5-hydroxylysine. Lysine 1104 is subject to 5-hydroxylysine; alternate. A glycan (O-linked (Gal...) hydroxylysine; alternate) is linked at lysine 1104. 4-hydroxyproline is present on residues proline 1116, proline 1119, proline 1122, proline 1140, and proline 1155. Low complexity predominate over residues 1122–1155 (PGEQGPSGASGPAGPRGPPGSAGSPGKDGLNGLP). A 3-hydroxyproline modification is found at proline 1160. Proline 1161 carries the 4-hydroxyproline modification. A compositionally biased stretch (pro residues) spans 1173 to 1188 (VGPPGPPGPPGPPGPP). A 3-hydroxyproline modification is found at proline 1175. At proline 1176 the chain carries 4-hydroxyproline. The residue at position 1178 (proline 1178) is a 3-hydroxyproline. Proline 1179 is modified (4-hydroxyproline). Proline 1181 bears the 3-hydroxyproline mark. Proline 1182, proline 1185, and proline 1188 each carry 4-hydroxyproline. The interval 1189–1214 (SGGFDFSFLPQPPQEKAHDGGRYYRA) is nonhelical region (C-terminal). Over residues 1203–1213 (EKAHDGGRYYR) the composition is skewed to basic and acidic residues. Allysine is present on lysine 1204. The propeptide at 1215-1460 (DDANVVRDRD…GMDIGPVCFL (246 aa)) is C-terminal propeptide. The Fibrillar collagen NC1 domain maps to 1225–1460 (LEVDTTLKSL…GMDIGPVCFL (236 aa)). Cystine bridges form between cysteine 1255–cysteine 1287, cysteine 1295–cysteine 1458, and cysteine 1366–cysteine 1411. Ca(2+) contacts are provided by aspartate 1273, asparagine 1275, glutamine 1276, cysteine 1278, and aspartate 1281. Asparagine 1361 carries an N-linked (GlcNAc...) asparagine glycan.

This sequence belongs to the fibrillar collagen family. As to quaternary structure, trimers of one alpha 2(I) and two alpha 1(I) chains. Interacts with MRC2. Interacts with TRAM2. Interacts with MFAP4 in a Ca (2+)-dependent manner. In terms of processing, contains mostly 4-hydroxyproline. Proline residues at the third position of the tripeptide repeating unit (G-X-Y) are hydroxylated in some or all of the chains. Post-translationally, contains 3-hydroxyproline at a few sites. This modification occurs on the first proline residue in the sequence motif Gly-Pro-Hyp, where Hyp is 4-hydroxyproline. Lysine residues at the third position of the tripeptide repeating unit (G-X-Y) are 5-hydroxylated in some or all of the chains. In terms of processing, O-glycosylated on hydroxylated lysine residues. The O-linked glycan consists of a Glc-Gal disaccharide.

Its subcellular location is the secreted. The protein resides in the extracellular space. It localises to the extracellular matrix. Its function is as follows. Type I collagen is a member of group I collagen (fibrillar forming collagen). The chain is Collagen alpha-1(I) chain (COL1A1) from Canis lupus familiaris (Dog).